We begin with the raw amino-acid sequence, 422 residues long: Serine--tRNA ligase (422 aa).

227–229 (TSE) serves as a coordination point for L-serine. ATP-binding positions include 258 to 260 (RRE) and Val274. Glu281 contacts L-serine. An ATP-binding site is contributed by 345 to 348 (ELTS). Thr380 contributes to the L-serine binding site.

The protein belongs to the class-II aminoacyl-tRNA synthetase family. Type-1 seryl-tRNA synthetase subfamily. In terms of assembly, homodimer. The tRNA molecule binds across the dimer.

The protein resides in the cytoplasm. It carries out the reaction tRNA(Ser) + L-serine + ATP = L-seryl-tRNA(Ser) + AMP + diphosphate + H(+). The enzyme catalyses tRNA(Sec) + L-serine + ATP = L-seryl-tRNA(Sec) + AMP + diphosphate + H(+). It functions in the pathway aminoacyl-tRNA biosynthesis; selenocysteinyl-tRNA(Sec) biosynthesis; L-seryl-tRNA(Sec) from L-serine and tRNA(Sec): step 1/1. Functionally, catalyzes the attachment of serine to tRNA(Ser). Is also able to aminoacylate tRNA(Sec) with serine, to form the misacylated tRNA L-seryl-tRNA(Sec), which will be further converted into selenocysteinyl-tRNA(Sec). This is Serine--tRNA ligase from Thermobifida fusca (strain YX).